Reading from the N-terminus, the 396-residue chain is tRNA-specific 2-thiouridylase MnmA (396 aa).

Residues 11–18 (GLSGGVDS) and Met-37 contribute to the ATP site. The segment at 97 to 99 (NPD) is interaction with target base in tRNA. Residue Cys-102 is the Nucleophile of the active site. Cys-102 and Cys-225 are disulfide-bonded. Gly-126 provides a ligand contact to ATP. Positions 175–177 (KDQ) are interaction with tRNA. Cys-225 acts as the Cysteine persulfide intermediate in catalysis. An interaction with tRNA region spans residues 343–344 (RY).

Belongs to the MnmA/TRMU family.

Its subcellular location is the cytoplasm. The enzyme catalyses S-sulfanyl-L-cysteinyl-[protein] + uridine(34) in tRNA + AH2 + ATP = 2-thiouridine(34) in tRNA + L-cysteinyl-[protein] + A + AMP + diphosphate + H(+). Functionally, catalyzes the 2-thiolation of uridine at the wobble position (U34) of tRNA, leading to the formation of s(2)U34. The protein is tRNA-specific 2-thiouridylase MnmA of Methylibium petroleiphilum (strain ATCC BAA-1232 / LMG 22953 / PM1).